The sequence spans 82 residues: Myosin light chain alkali (82 aa).

An EF-hand domain is found at 7 to 42; sequence GCYEDFIECLKLYDKEENGTMLLAELQHALLALGEN.

In terms of assembly, myosin is a hexamer of 2 heavy chains and 4 light chains.

This chain is Myosin light chain alkali (Mlc1), found in Drosophila teissieri (Fruit fly).